Consider the following 307-residue polypeptide: MTVTAAMVKELREKTGAGMMDCKKALAETNGDMEAAIDWLRAKGIAKADKKSGRTAAEGLIGIASSGTKAVVVEINSETDFVARNDAFQELVRGVANVALGTDGSVAAVSKATYPATGKSVEDTIKDAIATIGENMTLRRSALLEVEDGVVATYVHNAAGEGIGKLGVLVALKSTGDKEALNAIGRQVAMHVAATNPLAVRSSEIDPAVAERERNVFIEQSRASGKPDNIIEKMVDGRMRKFFEEVALLSQAFVMNPDQTVEAAIKEAEKSVGAPIEVAGIARLLLGEGVEKEESDFAAEVAAAAKG.

Positions 79–82 (TDFV) are involved in Mg(2+) ion dislocation from EF-Tu.

It belongs to the EF-Ts family.

It is found in the cytoplasm. Associates with the EF-Tu.GDP complex and induces the exchange of GDP to GTP. It remains bound to the aminoacyl-tRNA.EF-Tu.GTP complex up to the GTP hydrolysis stage on the ribosome. The sequence is that of Elongation factor Ts from Rhizobium meliloti (strain 1021) (Ensifer meliloti).